Consider the following 250-residue polypeptide: Flagellar L-ring protein (250 aa).

Residues 1–32 (MTRINTNTQKNNNTKFSKLILGVMVSSIVLSG) form the signal peptide. Residue C33 is the site of N-palmitoyl cysteine attachment. Residue C33 is the site of S-diacylglycerol cysteine attachment.

The protein belongs to the FlgH family. As to quaternary structure, the basal body constitutes a major portion of the flagellar organelle and consists of four rings (L,P,S, and M) mounted on a central rod.

The protein resides in the cell outer membrane. It is found in the bacterial flagellum basal body. In terms of biological role, assembles around the rod to form the L-ring and probably protects the motor/basal body from shearing forces during rotation. The sequence is that of Flagellar L-ring protein from Hydrogenovibrio crunogenus (strain DSM 25203 / XCL-2) (Thiomicrospira crunogena).